The chain runs to 300 residues: Heme A synthase (300 aa).

Topologically, residues 1 to 8 are cytoplasmic; that stretch reads MLKEKNLK. A helical membrane pass occupies residues 9–29; that stretch reads WLSLFTTVLMLFVQIGGALVT. Over 30–64 the chain is Extracellular; that stretch reads KTGSADGCGSSWPLCHGKFVPTHIPKETLIELAHR. Cys37 and Cys44 are disulfide-bonded. Glu60 is a catalytic residue. A heme o-binding site is contributed by His63. A helical membrane pass occupies residues 65–85; that stretch reads GVSGLALLSVTWLVILSIKYI. Over 86-92 the chain is Cytoplasmic; that stretch reads GHKKETK. The chain crosses the membrane as a helical span at residues 93–113; sequence FLCYMSIGFIFAQALIGAAAV. The Extracellular segment spans residues 114–123; it reads MWQQNGFVLA. Residues 124–144 traverse the membrane as a helical segment; that stretch reads LHFGISLISFSAVFLLTLLIF. His125 is a heme o binding site. Over 145–163 the chain is Cytoplasmic; sequence EVDQKFDATKLILQPKLRR. A helical membrane pass occupies residues 164–184; it reads HTIGLTSFIYFVIYSGALVRH. Over 185 to 218 the chain is Extracellular; the sequence is EKASLACSSWPLCRKGAFILPQNFYEWVQMSHRT. A disulfide bridge links Cys191 with Cys197. Residue His216 coordinates heme b. Residues 219 to 239 form a helical membrane-spanning segment; it reads LAFILFIWLTYVAFHAMRNYA. The Cytoplasmic portion of the chain corresponds to 240–249; that stretch reads QYRVIKYGYM. The helical transmembrane segment at 250-270 threads the bilayer; the sequence is IAFILICLQVTTGALTIFTAV. At 271-275 the chain is on the extracellular side; it reads NLYIA. Residues 276 to 296 traverse the membrane as a helical segment; it reads LLHALFITLLFGLLCYFILLI. His278 is a heme b binding site. Residues 297 to 300 lie on the Cytoplasmic side of the membrane; sequence SRAK.

Belongs to the COX15/CtaA family. Type 1 subfamily. As to quaternary structure, interacts with CtaB. It depends on heme b as a cofactor.

The protein localises to the cell membrane. It catalyses the reaction Fe(II)-heme o + 2 A + H2O = Fe(II)-heme a + 2 AH2. It functions in the pathway porphyrin-containing compound metabolism; heme A biosynthesis; heme A from heme O: step 1/1. Its function is as follows. Catalyzes the conversion of heme O to heme A by two successive hydroxylations of the methyl group at C8. The first hydroxylation forms heme I, the second hydroxylation results in an unstable dihydroxymethyl group, which spontaneously dehydrates, resulting in the formyl group of heme A. The protein is Heme A synthase of Macrococcus caseolyticus (strain JCSC5402) (Macrococcoides caseolyticum).